A 241-amino-acid chain; its full sequence is Orotidine 5'-phosphate decarboxylase (241 aa).

Substrate contacts are provided by residues Asp-18, Lys-39, 66 to 75, Thr-130, Arg-192, Gln-201, Gly-221, and Arg-222; that span reads DLKFHDIPAT. The active-site Proton donor is the Lys-68.

The protein belongs to the OMP decarboxylase family. Type 1 subfamily. In terms of assembly, homodimer.

The enzyme catalyses orotidine 5'-phosphate + H(+) = UMP + CO2. It participates in pyrimidine metabolism; UMP biosynthesis via de novo pathway; UMP from orotate: step 2/2. Catalyzes the decarboxylation of orotidine 5'-monophosphate (OMP) to uridine 5'-monophosphate (UMP). The chain is Orotidine 5'-phosphate decarboxylase from Synechococcus sp. (strain CC9605).